The primary structure comprises 423 residues: 58 kDa phosphoprotein (423 aa).

Residues 46-60 (KMGYEKMKSEDSTEE) are compositionally biased toward basic and acidic residues. A disordered region spans residues 46-82 (KMGYEKMKSEDSTEEKSDEEEEDEEEEEEEEEDDDPE). Residues 61–82 (KSDEEEEDEEEEEEEEEDDDPE) are compositionally biased toward acidic residues. 3 TPR repeats span residues 113–146 (ICKL…GNPS), 147–180 (AMIY…NVDS), and 181–214 (ANAY…DYDE). The tract at residues 260-301 (KKKAEKMYKENNKRENYDSDSSDSSYSEPDFSGDFPGGMPGG) is disordered. Positions 264–276 (EKMYKENNKRENY) are enriched in basic and acidic residues. Residues 292 to 362 (GDFPGGMPGG…GMPGMPGGMP (71 aa)) form a 19 X 3-4 AA approximate repeats region. The 63-residue stretch at 361 to 423 (MPDLNSPEMK…GGMMGEKPKP (63 aa)) folds into the STI1 domain.

Its subcellular location is the cytoplasm. Functionally, may play a role in protein folding or protein-protein interactions. May act as a co-chaperone. The protein is 58 kDa phosphoprotein of Plasmodium berghei.